Reading from the N-terminus, the 379-residue chain is UDP-4-amino-4-deoxy-L-arabinose--oxoglutarate aminotransferase (379 aa).

Lys-182 is modified (N6-(pyridoxal phosphate)lysine).

This sequence belongs to the DegT/DnrJ/EryC1 family. ArnB subfamily. Homodimer. Pyridoxal 5'-phosphate serves as cofactor.

It catalyses the reaction UDP-4-amino-4-deoxy-beta-L-arabinose + 2-oxoglutarate = UDP-beta-L-threo-pentopyranos-4-ulose + L-glutamate. It functions in the pathway nucleotide-sugar biosynthesis; UDP-4-deoxy-4-formamido-beta-L-arabinose biosynthesis; UDP-4-deoxy-4-formamido-beta-L-arabinose from UDP-alpha-D-glucuronate: step 2/3. Its pathway is bacterial outer membrane biogenesis; lipopolysaccharide biosynthesis. Catalyzes the conversion of UDP-4-keto-arabinose (UDP-Ara4O) to UDP-4-amino-4-deoxy-L-arabinose (UDP-L-Ara4N). The modified arabinose is attached to lipid A and is required for resistance to polymyxin and cationic antimicrobial peptides. This is UDP-4-amino-4-deoxy-L-arabinose--oxoglutarate aminotransferase from Klebsiella pneumoniae subsp. pneumoniae (strain ATCC 700721 / MGH 78578).